A 184-amino-acid chain; its full sequence is UPF0149 protein PP_5201 (184 aa).

It belongs to the UPF0149 family.

This chain is UPF0149 protein PP_5201, found in Pseudomonas putida (strain ATCC 47054 / DSM 6125 / CFBP 8728 / NCIMB 11950 / KT2440).